The primary structure comprises 81 residues: Cytotoxin 8 (81 aa).

An N-terminal signal peptide occupies residues 1 to 21; it reads MKTLLLTLVVVTIVCLDLGYT. 4 disulfide bridges follow: Cys24–Cys42, Cys35–Cys59, Cys63–Cys74, and Cys75–Cys80.

The protein belongs to the three-finger toxin family. Short-chain subfamily. Type IA cytotoxin sub-subfamily. As to quaternary structure, monomer in solution; Homodimer and oligomer in the presence of negatively charged lipids forming a pore with a size ranging between 20 and 30 Angstroms. As to expression, expressed by the venom gland.

Its subcellular location is the secreted. The protein localises to the target cell membrane. Functionally, shows cytolytic activity on many different cells by forming pore in lipid membranes. In vivo, increases heart rate or kills the animal by cardiac arrest. In addition, it binds to heparin with high affinity, interacts with Kv channel-interacting protein 1 (KCNIP1) in a calcium-independent manner, and binds to integrin alpha-V/beta-3 (ITGAV/ITGB3) with moderate affinity. This is Cytotoxin 8 from Naja atra (Chinese cobra).